The chain runs to 220 residues: SAGA-associated factor 11 homolog (220 aa).

A disordered region spans residues 1–38 (MSTGTANSAVSSKSTNSTTSTSKVPVNEKSNNSQNANT). An SGF11-type zinc finger spans residues 126–147 (CTCPNCDRPVSAARFAPHLEKC). 2 stretches are compositionally biased toward low complexity: residues 160–177 (RRLA…SSSS) and 204–220 (SQNS…GKTF). A disordered region spans residues 160 to 220 (RRLATKESNS…GSKKNNGKTF (61 aa)).

This sequence belongs to the SGF11 family. As to quaternary structure, component of some SAGA transcription coactivator-HAT complexes. Within the SAGA complex, participates in a subcomplex of SAGA called the DUB module (deubiquitination module).

The protein localises to the nucleus. Functionally, component of the transcription regulatory histone acetylation (HAT) complex SAGA, a multiprotein complex that activates transcription by remodeling chromatin and mediating histone acetylation and deubiquitination. Within the SAGA complex, participates in a subcomplex that specifically deubiquitinates histone H2B. The SAGA complex is recruited to specific gene promoters by activators, where it is required for transcription. The protein is SAGA-associated factor 11 homolog of Musca domestica (House fly).